A 137-amino-acid polypeptide reads, in one-letter code: Basic phospholipase A2 beta-bungarotoxin A1 chain (137 aa).

Residues 1–9 (AVCVSLLGA) form the signal peptide. A propeptide spanning residues 10-17 (ANIPPHPL) is cleaved from the precursor. 6 disulfides stabilise this stretch: cysteine 44-cysteine 136, cysteine 46-cysteine 62, cysteine 61-cysteine 117, cysteine 68-cysteine 110, cysteine 78-cysteine 103, and cysteine 96-cysteine 108. Positions 45, 47, and 49 each coordinate Ca(2+). Histidine 65 is an active-site residue. Aspartate 66 is a binding site for Ca(2+). Aspartate 111 is a catalytic residue.

The protein belongs to the phospholipase A2 family. Group I subfamily. D49 sub-subfamily. Heterodimer; disulfide-linked. The A chain has phospholipase A2 activity and the B chain shows homology with the basic protease inhibitors. The cofactor is Ca(2+). As to expression, expressed by the venom gland.

The protein resides in the secreted. The catalysed reaction is a 1,2-diacyl-sn-glycero-3-phosphocholine + H2O = a 1-acyl-sn-glycero-3-phosphocholine + a fatty acid + H(+). Snake venom phospholipase A2 (PLA2) that shows presynaptic neurotoxicity. The A chain has phospholipase activity. PLA2 catalyzes the calcium-dependent hydrolysis of the 2-acyl groups in 3-sn-phosphoglycerides. In Bungarus candidus (Malayan krait), this protein is Basic phospholipase A2 beta-bungarotoxin A1 chain.